The chain runs to 297 residues: Thiosulfate sulfurtransferase (297 aa).

N6-acetyllysine; alternate is present on K14. At K14 the chain carries N6-succinyllysine; alternate. The 119-residue stretch at 25-143 (VGPGLRVLDA…WLKEGHPVTS (119 aa)) folds into the Rhodanese 1 domain. O-linked (GlcNAc) serine glycosylation is present at S35. The residue at position 38 (S38) is a Phosphoserine. Residue K136 is modified to N6-acetyllysine; alternate. An N6-succinyllysine; alternate modification is found at K136. The tract at residues 144–159 (EPSRPEPAIFKATLNR) is hinge. K163 carries the N6-acetyllysine modification. Residues 173–288 (ESKRFQLVDS…WFHRAPPETW (116 aa)) enclose the Rhodanese 2 domain. The residue at position 175 (K175) is an N6-acetyllysine; alternate. K175 is subject to N6-succinyllysine; alternate. R187 serves as a coordination point for substrate. K224 is subject to N6-acetyllysine; alternate. At K224 the chain carries N6-succinyllysine; alternate. K236 carries the post-translational modification N6-acetyllysine. At K237 the chain carries N6-acetyllysine; alternate. K237 carries the post-translational modification N6-succinyllysine; alternate. Residue C248 is the Cysteine persulfide intermediate of the active site. K250 contacts substrate.

As to quaternary structure, monomer. As to expression, expressed in numerous tissues.

It is found in the mitochondrion matrix. The catalysed reaction is thiosulfate + hydrogen cyanide = thiocyanate + sulfite + 2 H(+). Together with MRPL18, acts as a mitochondrial import factor for the cytosolic 5S rRNA. Only the nascent unfolded cytoplasmic form is able to bind to the 5S rRNA. Formation of iron-sulfur complexes and cyanide detoxification. Binds molecular oxygen and sulfur. The chain is Thiosulfate sulfurtransferase (TST) from Bos taurus (Bovine).